A 185-amino-acid chain; its full sequence is Threonylcarbamoyl-AMP synthase (185 aa).

Residues 1–185 (MKNLNQVVDA…AKTGNTLRQG (185 aa)) enclose the YrdC-like domain.

The protein belongs to the SUA5 family. TsaC subfamily.

The protein localises to the cytoplasm. It catalyses the reaction L-threonine + hydrogencarbonate + ATP = L-threonylcarbamoyladenylate + diphosphate + H2O. In terms of biological role, required for the formation of a threonylcarbamoyl group on adenosine at position 37 (t(6)A37) in tRNAs that read codons beginning with adenine. Catalyzes the conversion of L-threonine, HCO(3)(-)/CO(2) and ATP to give threonylcarbamoyl-AMP (TC-AMP) as the acyladenylate intermediate, with the release of diphosphate. The sequence is that of Threonylcarbamoyl-AMP synthase from Aliivibrio fischeri (strain ATCC 700601 / ES114) (Vibrio fischeri).